Consider the following 475-residue polypeptide: Ribulose bisphosphate carboxylase large chain (475 aa).

Residues 1–2 (MS) constitute a propeptide that is removed on maturation. Pro-3 carries the N-acetylproline modification. Lys-14 bears the N6,N6,N6-trimethyllysine mark. Substrate is bound by residues Asn-123 and Thr-173. The active-site Proton acceptor is Lys-175. Residue Lys-177 participates in substrate binding. Residues Lys-201, Asp-203, and Glu-204 each coordinate Mg(2+). Lys-201 carries the post-translational modification N6-carboxylysine. His-294 (proton acceptor) is an active-site residue. Substrate is bound by residues Arg-295, His-327, and Ser-379.

This sequence belongs to the RuBisCO large chain family. Type I subfamily. Heterohexadecamer of 8 large chains and 8 small chains; disulfide-linked. The disulfide link is formed within the large subunit homodimers. Requires Mg(2+) as cofactor. The disulfide bond which can form in the large chain dimeric partners within the hexadecamer appears to be associated with oxidative stress and protein turnover.

Its subcellular location is the plastid. It is found in the chloroplast. The enzyme catalyses 2 (2R)-3-phosphoglycerate + 2 H(+) = D-ribulose 1,5-bisphosphate + CO2 + H2O. It catalyses the reaction D-ribulose 1,5-bisphosphate + O2 = 2-phosphoglycolate + (2R)-3-phosphoglycerate + 2 H(+). RuBisCO catalyzes two reactions: the carboxylation of D-ribulose 1,5-bisphosphate, the primary event in carbon dioxide fixation, as well as the oxidative fragmentation of the pentose substrate in the photorespiration process. Both reactions occur simultaneously and in competition at the same active site. This Vitis vinifera (Grape) protein is Ribulose bisphosphate carboxylase large chain.